Here is a 563-residue protein sequence, read N- to C-terminus: Chaperonin GroEL 1 (563 aa).

ATP contacts are provided by residues 29 to 32, 86 to 90, Gly413, and Asp492; these read TIGP and DGTTT. The interval 520-541 is disordered; sequence DKPEPPSAPGAEGGDPMGGMGG. Positions 530–541 are enriched in gly residues; the sequence is AEGGDPMGGMGG.

Belongs to the chaperonin (HSP60) family. Forms a cylinder of 14 subunits composed of two heptameric rings stacked back-to-back. Interacts with the co-chaperonin GroES.

It localises to the cytoplasm. The enzyme catalyses ATP + H2O + a folded polypeptide = ADP + phosphate + an unfolded polypeptide.. Together with its co-chaperonin GroES, plays an essential role in assisting protein folding. The GroEL-GroES system forms a nano-cage that allows encapsulation of the non-native substrate proteins and provides a physical environment optimized to promote and accelerate protein folding. This Prochlorococcus marinus (strain NATL1A) protein is Chaperonin GroEL 1.